The primary structure comprises 469 residues: Aspartyl/glutamyl-tRNA(Asn/Gln) amidotransferase subunit B (469 aa).

Belongs to the GatB/GatE family. GatB subfamily. As to quaternary structure, heterotrimer of A, B and C subunits.

The catalysed reaction is L-glutamyl-tRNA(Gln) + L-glutamine + ATP + H2O = L-glutaminyl-tRNA(Gln) + L-glutamate + ADP + phosphate + H(+). The enzyme catalyses L-aspartyl-tRNA(Asn) + L-glutamine + ATP + H2O = L-asparaginyl-tRNA(Asn) + L-glutamate + ADP + phosphate + 2 H(+). Its function is as follows. Allows the formation of correctly charged Asn-tRNA(Asn) or Gln-tRNA(Gln) through the transamidation of misacylated Asp-tRNA(Asn) or Glu-tRNA(Gln) in organisms which lack either or both of asparaginyl-tRNA or glutaminyl-tRNA synthetases. The reaction takes place in the presence of glutamine and ATP through an activated phospho-Asp-tRNA(Asn) or phospho-Glu-tRNA(Gln). The polypeptide is Aspartyl/glutamyl-tRNA(Asn/Gln) amidotransferase subunit B (Methanococcus vannielii (strain ATCC 35089 / DSM 1224 / JCM 13029 / OCM 148 / SB)).